Here is a 246-residue protein sequence, read N- to C-terminus: Trypsin V-B (246 aa).

A signal peptide spans 1–15 (MKICIFFTLLGTVAA). A propeptide spans 16–24 (FPTEDNDDR) (activation peptide). In terms of domain architecture, Peptidase S1 spans 25 to 244 (IVGGYTCQEH…YLNWIQQTVA (220 aa)). Cystine bridges form between cysteine 31–cysteine 160, cysteine 49–cysteine 65, cysteine 133–cysteine 233, cysteine 140–cysteine 206, cysteine 171–cysteine 185, and cysteine 196–cysteine 220. The active-site Charge relay system is histidine 64. Ca(2+) contacts are provided by glutamate 76, asparagine 78, and glutamate 86. Catalysis depends on aspartate 108, which acts as the Charge relay system. The Charge relay system role is filled by serine 200.

This sequence belongs to the peptidase S1 family. Ca(2+) is required as a cofactor.

It is found in the secreted. Its subcellular location is the extracellular space. It catalyses the reaction Preferential cleavage: Arg-|-Xaa, Lys-|-Xaa.. The chain is Trypsin V-B from Rattus norvegicus (Rat).